Consider the following 445-residue polypeptide: 23S rRNA (uracil(1939)-C(5))-methyltransferase RlmD (445 aa).

The 59-residue stretch at 12–70 (SKQLSSKLSLKVTQLDHLGAGIAHHDGKIVFINGALPGETVSVQLTEQKKKFARAKLLK) folds into the TRAM domain. Cysteine 83, cysteine 89, cysteine 92, and cysteine 171 together coordinate [4Fe-4S] cluster. The S-adenosyl-L-methionine site is built by glutamine 278, phenylalanine 307, asparagine 312, glutamate 328, aspartate 355, and aspartate 375. Cysteine 401 serves as the catalytic Nucleophile.

The protein belongs to the class I-like SAM-binding methyltransferase superfamily. RNA M5U methyltransferase family. RlmD subfamily.

It catalyses the reaction uridine(1939) in 23S rRNA + S-adenosyl-L-methionine = 5-methyluridine(1939) in 23S rRNA + S-adenosyl-L-homocysteine + H(+). Catalyzes the formation of 5-methyl-uridine at position 1939 (m5U1939) in 23S rRNA. In Shewanella halifaxensis (strain HAW-EB4), this protein is 23S rRNA (uracil(1939)-C(5))-methyltransferase RlmD.